The primary structure comprises 197 residues: NADH-quinone oxidoreductase subunit C (197 aa).

It belongs to the complex I 30 kDa subunit family. In terms of assembly, NDH-1 is composed of 14 different subunits. Subunits NuoB, C, D, E, F, and G constitute the peripheral sector of the complex.

The protein resides in the cell inner membrane. It carries out the reaction a quinone + NADH + 5 H(+)(in) = a quinol + NAD(+) + 4 H(+)(out). Functionally, NDH-1 shuttles electrons from NADH, via FMN and iron-sulfur (Fe-S) centers, to quinones in the respiratory chain. The immediate electron acceptor for the enzyme in this species is believed to be ubiquinone. Couples the redox reaction to proton translocation (for every two electrons transferred, four hydrogen ions are translocated across the cytoplasmic membrane), and thus conserves the redox energy in a proton gradient. This Neisseria meningitidis serogroup C (strain 053442) protein is NADH-quinone oxidoreductase subunit C.